The following is a 224-amino-acid chain: ATP synthase subunit a (224 aa).

6 helical membrane passes run 17-37 (LSLN…IYWL), 72-92 (IFIS…FPYI), 99-119 (LTLT…YGWI), 125-145 (MFAH…MVCI), 170-190 (LLLT…VTFL), and 195-215 (IALL…FAVL).

It belongs to the ATPase A chain family. F-type ATPases have 2 components, CF(1) - the catalytic core - and CF(0) - the membrane proton channel. CF(1) has five subunits: alpha(3), beta(3), gamma(1), delta(1), epsilon(1). CF(0) has three main subunits: a, b and c.

It localises to the mitochondrion inner membrane. Mitochondrial membrane ATP synthase (F(1)F(0) ATP synthase or Complex V) produces ATP from ADP in the presence of a proton gradient across the membrane which is generated by electron transport complexes of the respiratory chain. F-type ATPases consist of two structural domains, F(1) - containing the extramembraneous catalytic core and F(0) - containing the membrane proton channel, linked together by a central stalk and a peripheral stalk. During catalysis, ATP synthesis in the catalytic domain of F(1) is coupled via a rotary mechanism of the central stalk subunits to proton translocation. Key component of the proton channel; it may play a direct role in the translocation of protons across the membrane. In Drosophila mauritiana (Fruit fly), this protein is ATP synthase subunit a (mt:ATPase6).